A 981-amino-acid chain; its full sequence is Rab3 GTPase-activating protein catalytic subunit (981 aa).

Residues Ser83, Ser379, Ser536, Ser579, Ser581, and Ser590 each carry the phosphoserine modification. The disordered stretch occupies residues 532 to 558; the sequence is GKKTSLSDSTTSAYPGDAGKTGGQLGL. A disordered region spans residues 591–614; the sequence is DTEDLKGNGQESGKKGGPKEMANL. At Ser664 the chain carries Phosphoserine.

This sequence belongs to the Rab3-GAP catalytic subunit family. In terms of assembly, the Rab3 GTPase-activating complex is a heterodimer composed of Rab3gap1 and Rab3gap2. The Rab3 GTPase-activating complex interacts with DMXL2. Interacts with LMAN1. As to expression, in the eye, it is highly expressed within the lens, particularly in the anterior lens epithelium and in a ring corresponding to the equatorial region where anterior cells are differentiating into lens fibers. Also highly expressed in the retina.

The protein resides in the cytoplasm. The protein localises to the endoplasmic reticulum. It is found in the golgi apparatus. It localises to the cis-Golgi network. Catalytic subunit of the Rab3 GTPase-activating (Rab3GAP) complex composed of RAB3GAP1 and RAB3GAP2, which has GTPase-activating protein (GAP) activity towards various Rab3 subfamily members (RAB3A, RAB3B, RAB3C and RAB3D), RAB5A and RAB43, and guanine nucleotide exchange factor (GEF) activity towards RAB18. As part of the Rab3GAP complex, acts as a GAP for Rab3 proteins by converting active RAB3-GTP to the inactive form RAB3-GDP. Rab3 proteins are involved in regulated exocytosis of neurotransmitters and hormones. The Rab3GAP complex, acts as a GEF for RAB18 by promoting the conversion of inactive RAB18-GDP to the active form RAB18-GTP. Recruits and stabilizes RAB18 at the cis-Golgi membrane where RAB18 is most likely activated. Also involved in RAB18 recruitment at the endoplasmic reticulum (ER) membrane where it maintains proper ER structure. Required for normal eye and brain development. May participate in neurodevelopmental processes such as proliferation, migration and differentiation before synapse formation, and non-synaptic vesicular release of neurotransmitters. The protein is Rab3 GTPase-activating protein catalytic subunit of Mus musculus (Mouse).